A 360-amino-acid polypeptide reads, in one-letter code: G-protein coupled receptor 15 (360 aa).

Residues 1-33 (MDPEETSVYLDYYYATSPNPDIRETHSHVPYTS) are Extracellular-facing. A helical membrane pass occupies residues 34–54 (VFLPVFYIAVFLTGVLGNLVL). At 55-69 (MGALHFKPGSRRLID) the chain is on the cytoplasmic side. The helical transmembrane segment at 70–90 (IFIINLAASDFIFLVTLPLWV) threads the bilayer. The Extracellular portion of the chain corresponds to 91–120 (DKEASLGLWRTGSFLCKGSSYMISVNMHCS). A helical membrane pass occupies residues 121 to 141 (VFLLTCMSVDRYLAIVCPVVS). Topologically, residues 142–149 (RKFRRTDC) are cytoplasmic. A helical transmembrane segment spans residues 150–170 (AYVVCASIWFISCLLGLPTLL). Residues 171-192 (SRELTLIDDKPYCAEKKATPLK) are Extracellular-facing. The chain crosses the membrane as a helical span at residues 193 to 213 (LIWSLVALIFTFFVPLLSIVT). Residues 214-239 (CYCRIARKLCAHYQQSGKHNKKLKKS) are Cytoplasmic-facing. The helical transmembrane segment at 240-260 (IKIIFIVVAAFLVSWLPFNTS) threads the bilayer. The Extracellular segment spans residues 261–284 (KLLAIVSGLQQERYFPSAILQLGM). A helical membrane pass occupies residues 285–305 (EVSGPLAFANSCVNPFIYYIF). Over 306 to 360 (DSYIRRAIVHCLCPCLKNYDFGSSTETSDSHLTKALSTFIHAEDFTRRRKRSVSL) the chain is Cytoplasmic. The residue at position 359 (Ser-359) is a Phosphoserine.

The protein belongs to the G-protein coupled receptor 1 family. As to quaternary structure, interacts with adapter YWHAE; this interaction promotes ER-to-Golgi transport of GPR15. Post-translationally, phosphorylation is necessary for YWHAE binding and efficient surface expression. In terms of processing, O-glycosylated. Sialylated O-glycans in the N-terminal tail inhibits binding of GPR15LG. Sulfation is required for efficient binding of GPR15LG.

It localises to the cell membrane. Its function is as follows. G protein-coupled receptor that plays an important role in immune homeostasis. Acts via its natural ligand GPR15LG, a chemokine-like polypeptide strongly expressed in gastrointestinal tissues. GPR15-GPR15LG signaling axis regulates intestinal homeostasis and inflammation through the migration of immune cells. Controls thereby the specific homing of T-cells, particularly FOXP3+ regulatory T-cells (Tregs), to the large intestine lamina propria. Also required for skin localization of thymus-derived dendritic epidermal T-cells. Plays an important role in mediating cytoprotective function as well as angiogenesis of thrombomodulin. Mechanistically, preferentially signals through the Gi/o pathway to inhibit adenylate cyclase activity and activate a phosphatidylinositol-calcium second messenger system that regulates the release of Ca(2+) ions from intracellular stores. The sequence is that of G-protein coupled receptor 15 (GPR15) from Chlorocebus aethiops (Green monkey).